The chain runs to 1024 residues: DNA-directed RNA polymerase subunit beta (1024 aa).

The protein belongs to the RNA polymerase beta chain family. In terms of assembly, in plastids the minimal PEP RNA polymerase catalytic core is composed of four subunits: alpha, beta, beta', and beta''. When a (nuclear-encoded) sigma factor is associated with the core the holoenzyme is formed, which can initiate transcription (Potential).

It localises to the plastid. It is found in the apicoplast. The catalysed reaction is RNA(n) + a ribonucleoside 5'-triphosphate = RNA(n+1) + diphosphate. Its function is as follows. DNA-dependent RNA polymerase catalyzes the transcription of DNA into RNA using the four ribonucleoside triphosphates as substrates. The chain is DNA-directed RNA polymerase subunit beta (rpoB) from Plasmodium falciparum (isolate 3D7).